Consider the following 99-residue polypeptide: Co-chaperonin GroES (99 aa).

It belongs to the GroES chaperonin family. Heptamer of 7 subunits arranged in a ring. Interacts with the chaperonin GroEL.

Its subcellular location is the cytoplasm. Together with the chaperonin GroEL, plays an essential role in assisting protein folding. The GroEL-GroES system forms a nano-cage that allows encapsulation of the non-native substrate proteins and provides a physical environment optimized to promote and accelerate protein folding. GroES binds to the apical surface of the GroEL ring, thereby capping the opening of the GroEL channel. The sequence is that of Co-chaperonin GroES from Corynebacterium efficiens (strain DSM 44549 / YS-314 / AJ 12310 / JCM 11189 / NBRC 100395).